A 95-amino-acid polypeptide reads, in one-letter code: Small ribosomal subunit protein bS6 (95 aa).

Belongs to the bacterial ribosomal protein bS6 family.

Binds together with bS18 to 16S ribosomal RNA. The protein is Small ribosomal subunit protein bS6 of Bacillus pumilus (strain SAFR-032).